We begin with the raw amino-acid sequence, 158 residues long: Large ribosomal subunit protein bL21 (158 aa).

The disordered stretch occupies residues 106 to 158; sequence SKPKKAAAKPIKEEATAAKGTKDTAVEKKAEKTAEKKTASQKKAAVASKSKKD. Residues 115 to 143 show a composition bias toward basic and acidic residues; that stretch reads PIKEEATAAKGTKDTAVEKKAEKTAEKKT. A compositionally biased stretch (low complexity) spans 146-158; that stretch reads QKKAAVASKSKKD.

This sequence belongs to the bacterial ribosomal protein bL21 family. In terms of assembly, part of the 50S ribosomal subunit. Contacts protein L20.

Functionally, this protein binds to 23S rRNA in the presence of protein L20. This is Large ribosomal subunit protein bL21 from Bartonella tribocorum (strain CIP 105476 / IBS 506).